We begin with the raw amino-acid sequence, 86 residues long: Kappa-theraphotoxin-Cg1a 2 (86 aa).

An N-terminal signal peptide occupies residues 1-21 (MKVSVVITLAVLGVMFVWASA). A propeptide spanning residues 22 to 50 (AELEERGSDQRDSPAWLKSMERIFQSEER) is cleaved from the precursor. 3 disulfides stabilise this stretch: cysteine 52–cysteine 66, cysteine 59–cysteine 71, and cysteine 65–cysteine 78. A Phenylalanine amide modification is found at phenylalanine 84.

The protein belongs to the neurotoxin 10 (Hwtx-1) family. 28 (Jztx-11) subfamily. Expressed by the venom gland.

The protein localises to the secreted. In terms of biological role, this toxin acts as a voltage-dependent gating-modifier. It inhibits the sodium conductance (IC(50)=124 nM) and slows the fast inactivation (EC(50)=1180 nM) of Nav1.5/SCN5A. It significantly shifts the activation to more depolarized voltages and decreases the deactivation of Nav1.5 currents upon extreme depolarization, but only slightly affects voltage-dependence of steady-state inactivation. In addition, this toxin causes an approximately five-fold decrease in the rate of recovery from inactivation and an approximately 1.9-fold reduction in the closed-state inactivation rate. This toxin integrates the functions of site 3 toxins (alpha-scorpion toxins) with site 4 toxins (beta-scorpion and spider toxins) by targeting multiple sites on Nav1.5. Also shows inhibition of voltage-gated potassium channels (5 uM completely inhibits Kv2.1/KCNB1, whereas 5 uM moderately inhibits Kv4.2/KCND2 Kv4.1/KCND1 channels). This Chilobrachys guangxiensis (Chinese earth tiger tarantula) protein is Kappa-theraphotoxin-Cg1a 2.